The primary structure comprises 207 residues: 5-amino-6-(5-phosphoribosylamino)uracil reductase (207 aa).

Residue Ser-6 participates in substrate binding. An NADP(+)-binding site is contributed by Trp-8. Substrate is bound at residue Arg-22. Asp-38 is a binding site for NADP(+). Substrate is bound by residues Leu-42 and Arg-45. NADP(+) is bound at residue Ser-72. Glu-137 contributes to the substrate binding site.

Belongs to the HTP reductase family.

It carries out the reaction 5-amino-6-(5-phospho-D-ribitylamino)uracil + NADP(+) = 5-amino-6-(5-phospho-D-ribosylamino)uracil + NADPH + H(+). The protein operates within cofactor biosynthesis; riboflavin biosynthesis; 5-amino-6-(D-ribitylamino)uracil from GTP: step 3/4. This is 5-amino-6-(5-phosphoribosylamino)uracil reductase (ribD2) from Buchnera aphidicola subsp. Acyrthosiphon pisum (strain APS) (Acyrthosiphon pisum symbiotic bacterium).